A 439-amino-acid chain; its full sequence is Proline--tRNA ligase (439 aa).

The protein belongs to the class-II aminoacyl-tRNA synthetase family. ProS type 2 subfamily. In terms of assembly, homodimer.

It is found in the cytoplasm. It carries out the reaction tRNA(Pro) + L-proline + ATP = L-prolyl-tRNA(Pro) + AMP + diphosphate. Catalyzes the attachment of proline to tRNA(Pro) in a two-step reaction: proline is first activated by ATP to form Pro-AMP and then transferred to the acceptor end of tRNA(Pro). The sequence is that of Proline--tRNA ligase from Hyphomonas neptunium (strain ATCC 15444).